Here is a 210-residue protein sequence, read N- to C-terminus: Protein GET1 (210 aa).

Residues 1–4 are Lumenal-facing; the sequence is MPSL. The helical transmembrane segment at 5–24 threads the bilayer; the sequence is LIIVLIIHVVTYLINTIGAN. The Cytoplasmic segment spans residues 25 to 110; that stretch reads TIDSLLWLLY…SFDLAVKSVR (86 aa). Residues 39–95 are a coiled coil; that stretch reads NQTSQTADEQRRLKREVMQLKREMNATSSQDEFAKWAKLRRRHDKTMEEYEAKNKAL. Residues 111–131 traverse the membrane as a helical segment; the sequence is FFSTTGLKLFLQFWFSKTPIF. Topologically, residues 132 to 155 are lumenal; the sequence is ELPRGWIPWQVEWVLSFPRAPLGT. The helical transmembrane segment at 156 to 172 threads the bilayer; the sequence is VSIQIWGGVCATVVSLA. At 173-210 the chain is on the cytoplasmic side; sequence GDAIGVVNVYLTSKAPKQKEPATSGENSARPMAIKKEL. The disordered stretch occupies residues 189–210; it reads KQKEPATSGENSARPMAIKKEL.

It belongs to the WRB/GET1 family. Interacts with GET3.

It is found in the endoplasmic reticulum membrane. In terms of biological role, required for the post-translational delivery of tail-anchored (TA) proteins to the endoplasmic reticulum. Acts as a membrane receptor for soluble GET3, which recognizes and selectively binds the transmembrane domain of TA proteins in the cytosol. The polypeptide is Protein GET1 (Coccidioides posadasii (strain C735) (Valley fever fungus)).